A 533-amino-acid chain; its full sequence is Homeobox protein DTH-1 (533 aa).

2 disordered regions span residues 1 to 28 and 308 to 378; these read MSSN…NECP and LPQN…GKKR. Residues 8–19 are compositionally biased toward basic and acidic residues; that stretch reads VKYDTNFDREGY. Residues 308 to 317 show a composition bias toward low complexity; that stretch reads LPQNLPNPNQ. Polar residues predominate over residues 318-333; the sequence is TDSIYSSSINENNQPI. Residues 360–371 show a composition bias toward low complexity; sequence SVENNDNENSSS. The segment at residues 377 to 436 is a DNA-binding region (homeobox); that stretch reads KRKRRVLFSKKQILELERHFRQKKYLSAPEREHLANLIGLSPTQVKIWFQNHRYKMKRAH.

This sequence belongs to the NK-2 homeobox family. In terms of tissue distribution, intestine and unidentified peripheral parenchymal cells. Slightly higher levels in the cephalic region compared to other body regions.

Its subcellular location is the nucleus. In terms of biological role, this protein might be involved in determination and/or differentiation of nerve cells in the continuous replacement of neurons in the cephalic region. This is Homeobox protein DTH-1 (DTH-1) from Girardia tigrina (Planarian).